Reading from the N-terminus, the 271-residue chain is Neurexophilin-1 (271 aa).

Positions Met-1–Cys-21 are cleaved as a signal peptide. The segment at Ala-22–Leu-97 is II. Residues Asn-23, Asn-68, Asn-93, Asn-146, Asn-156, and Asn-162 are each glycosylated (N-linked (GlcNAc...) asparagine). An III region spans residues Gln-98–Phe-176. The IV (linker domain) stretch occupies residues Asp-177–Asp-185. The tract at residues Ala-186–Gly-271 is v (Cys-rich).

This sequence belongs to the neurexophilin family. May be proteolytically processed at the boundary between the N-terminal non-conserved and the central conserved domain in neuron-like cells. As to expression, highest level in brain.

The protein localises to the secreted. Its function is as follows. May be signaling molecules that resemble neuropeptides. Ligand for alpha-neurexins. This Rattus norvegicus (Rat) protein is Neurexophilin-1 (Nxph1).